Consider the following 521-residue polypeptide: Manganese transporter pdt1 (521 aa).

Serine 42 is modified (phosphoserine). Threonine 43 is modified (phosphothreonine). 12 helical membrane passes run 71–91, 104–124, 152–172, 179–199, 210–230, 233–253, 260–280, 325–345, 373–393, 417–437, 440–460, and 495–515; these read YCKF…PGNY, KLLF…SLCI, VLAE…TAVA, IPLV…LIAW, IFET…AVVL, VHIG…TVFS, SIGI…SGLV, LFTF…AVFY, LFAV…TIAG, IAII…LNQV, ASQV…VMFT, and IVTW…IVWL.

It belongs to the NRAMP family.

It localises to the endoplasmic reticulum membrane. Functionally, transports manganese ions into the cell. Regulates cell morphogenesis through control of manganese homeostasis. This chain is Manganese transporter pdt1 (pdt1), found in Schizosaccharomyces pombe (strain 972 / ATCC 24843) (Fission yeast).